We begin with the raw amino-acid sequence, 546 residues long: MTPKEFKRLYRIISILLEQGIDELVPARYQPWPGRLARRSLFWLKNKRQGLNRGARIRLAFEALGPIFIKFGQMLSTRRDLLPPDIAEELALLQDRVPPFCGQAARRQIEASLGCTIETLFDDFDETPLASASIAQVHTARLKENGREIVIKVIRPDIEPVIEADLRLMQALARLVARFVPQSGRLRPIEVVEEYRKTILDELNLMREAANAIQLRRNFTGSEALYVPEVFTEHCREQVLVMERIYGIPVSDIAALEANGTNMKLLAERGVEVFFTQVFRDSFFHADMHPGNIFVSYEHPENPLWIGIDCGIVGTLNREDKRYLAENFLAFFNRDYRRVAELHVESGWVPPDTKVDEFEFAIRTVLEPIFEKPLSEISFGHVLLNLFNTARRFNMQVQPQLVLLQKTLLYVEGLGRQLYPQLDLWQTAKPYLENWMYQQVGPKAVWNAIKEKAPFWAEKLPELPELVYETLRQTRHQQRHFDQMFADFRRHSRRQGQARYLLGVGASLLLAGVFLLTQKQHIEWGQISLAGAGLCWLLGWLRTRSH.

Positions 123-501 (DFDETPLASA…SRRQGQARYL (379 aa)) constitute a Protein kinase domain. Residues 129-137 (LASASIAQV) and Lys152 contribute to the ATP site. Residue Asp287 is the Proton acceptor of the active site. A run of 2 helical transmembrane segments spans residues 498-517 (ARYLLGVGASLLLAGVFLLT) and 522-541 (IEWGQISLAGAGLCWLLGWL).

It belongs to the ABC1 family. UbiB subfamily.

It is found in the cell inner membrane. It functions in the pathway cofactor biosynthesis; ubiquinone biosynthesis [regulation]. Its function is as follows. Is probably a protein kinase regulator of UbiI activity which is involved in aerobic coenzyme Q (ubiquinone) biosynthesis. This is Probable protein kinase UbiB from Aeromonas hydrophila subsp. hydrophila (strain ATCC 7966 / DSM 30187 / BCRC 13018 / CCUG 14551 / JCM 1027 / KCTC 2358 / NCIMB 9240 / NCTC 8049).